The following is a 130-amino-acid chain: Glycine cleavage system H protein (130 aa).

Residues 22–103 form the Lipoyl-binding domain; it reads KAYIGISDCA…PYGSWIAAIE (82 aa). Residue lysine 63 is modified to N6-lipoyllysine.

Belongs to the GcvH family. The glycine cleavage system is composed of four proteins: P, T, L and H. The cofactor is (R)-lipoate.

Functionally, the glycine cleavage system catalyzes the degradation of glycine. The H protein shuttles the methylamine group of glycine from the P protein to the T protein. In Clostridium botulinum (strain ATCC 19397 / Type A), this protein is Glycine cleavage system H protein.